The following is a 218-amino-acid chain: Putative NAD(P)H nitroreductase SH0546 (218 aa).

It belongs to the nitroreductase family. FMN serves as cofactor.

The protein is Putative NAD(P)H nitroreductase SH0546 of Staphylococcus haemolyticus (strain JCSC1435).